Reading from the N-terminus, the 202-residue chain is Proteasome subunit beta 1 (202 aa).

Position 1 (Met1) is a propeptide, removed in mature form; by autocatalysis. Thr2 serves as the catalytic Nucleophile.

The protein belongs to the peptidase T1B family. In terms of assembly, the 20S proteasome core is composed of 14 alpha and 14 beta subunits that assemble into four stacked heptameric rings, resulting in a barrel-shaped structure. The two inner rings, each composed of seven catalytic beta subunits, are sandwiched by two outer rings, each composed of seven alpha subunits. The catalytic chamber with the active sites is on the inside of the barrel. Has a gated structure, the ends of the cylinder being occluded by the N-termini of the alpha-subunits. Is capped at one or both ends by the proteasome regulatory ATPase, PAN.

It localises to the cytoplasm. It carries out the reaction Cleavage of peptide bonds with very broad specificity.. With respect to regulation, the formation of the proteasomal ATPase PAN-20S proteasome complex, via the docking of the C-termini of PAN into the intersubunit pockets in the alpha-rings, triggers opening of the gate for substrate entry. Interconversion between the open-gate and close-gate conformations leads to a dynamic regulation of the 20S proteasome proteolysis activity. Component of the proteasome core, a large protease complex with broad specificity involved in protein degradation. The protein is Proteasome subunit beta 1 of Pyrobaculum aerophilum (strain ATCC 51768 / DSM 7523 / JCM 9630 / CIP 104966 / NBRC 100827 / IM2).